Here is a 164-residue protein sequence, read N- to C-terminus: MGDLPGLVRLSIALRIQPNDGPVFYKVDGQRFGQNRTIKLLTGSSYKVEVKIKPTTLQVENISIGGVVVPLELKSKEPDGDRIVYTGTYDTEGVAPTKSGERQPIQITMPFTDIGTFETMWQVKFYNYHKRDHCQWGSPFSVIEYECKPNETRSLMWVNKESFL.

This sequence belongs to the CNRIP family. As to quaternary structure, interacts with the cannabinoid receptor CNR1 (via C-terminus). Does not interact with cannabinoid receptor CNR2.

In terms of biological role, suppresses cannabinoid receptor CNR1-mediated tonic inhibition of voltage-gated calcium channels. The sequence is that of CB1 cannabinoid receptor-interacting protein 1 (CNRIP1) from Bos taurus (Bovine).